Reading from the N-terminus, the 253-residue chain is Probable transcriptional regulatory protein syc0529_d (253 aa).

Belongs to the TACO1 family.

The protein resides in the cytoplasm. The chain is Probable transcriptional regulatory protein syc0529_d from Synechococcus sp. (strain ATCC 27144 / PCC 6301 / SAUG 1402/1) (Anacystis nidulans).